The following is a 278-amino-acid chain: Juvenile hormone acid O-methyltransferase (278 aa).

Belongs to the methyltransferase superfamily. Specifically expressed in the corpora allata (CA).

It catalyses the reaction (2E,6E)-farnesoate + S-adenosyl-L-methionine = methyl (2E,6E)-farnesoate + S-adenosyl-L-homocysteine. The enzyme catalyses juvenile hormone III carboxylate + S-adenosyl-L-methionine = juvenile hormone III + S-adenosyl-L-homocysteine. Its function is as follows. O-methyltransferase that transfers a methyl group from S-adenosyl-L-methionine (SAM) to the carboxyl group of juvenile hormone acids to produce active juvenile hormones in the corpora allata, the last step during juvenile hormone biosynthesis. Also able to methylate farnesoate to methyl farnesoate. In Bombyx mori (Silk moth), this protein is Juvenile hormone acid O-methyltransferase.